A 694-amino-acid chain; its full sequence is Elongation factor G (694 aa).

One can recognise a tr-type G domain in the interval 6–288 (KLYRNIGIAA…GVIEYLPSPT (283 aa)). GTP is bound by residues 15–22 (AHVDAGKT), 86–90 (DTPGH), and 140–143 (NKMD).

It belongs to the TRAFAC class translation factor GTPase superfamily. Classic translation factor GTPase family. EF-G/EF-2 subfamily.

The protein resides in the cytoplasm. In terms of biological role, catalyzes the GTP-dependent ribosomal translocation step during translation elongation. During this step, the ribosome changes from the pre-translocational (PRE) to the post-translocational (POST) state as the newly formed A-site-bound peptidyl-tRNA and P-site-bound deacylated tRNA move to the P and E sites, respectively. Catalyzes the coordinated movement of the two tRNA molecules, the mRNA and conformational changes in the ribosome. This chain is Elongation factor G, found in Legionella pneumophila (strain Paris).